Reading from the N-terminus, the 517-residue chain is Salicyloyl-CoA 5-hydroxylase (517 aa).

Belongs to the aromatic-ring hydroxylase family. KMO subfamily.

The catalysed reaction is 2-hydroxybenzoyl-CoA + NADH + O2 + H(+) = 2,5-dihydroxybenzoyl-CoA + NAD(+) + H2O. Functionally, involved in the degradation of salicylate via a pathway involving coenzyme A derivative. Catalyzes the aromatic hydroxylation of salicylyl-CoA to yield gentisyl-CoA. The sequence is that of Salicyloyl-CoA 5-hydroxylase from Streptomyces sp.